Consider the following 666-residue polypeptide: Frizzled-3 (666 aa).

The first 22 residues, 1 to 22, serve as a signal peptide directing secretion; it reads MAMTWIVFSLWPLTVFMGHIGG. Residues 23 to 136 enclose the FZ domain; that stretch reads HSLFSCEPIT…CSRFPDCDEP (114 aa). Residues 23 to 205 are Extracellular-facing; that stretch reads HSLFSCEPIT…REELSFARYF (183 aa). 5 disulfide bridges follow: Cys-28-Cys-89, Cys-36-Cys-82, Cys-73-Cys-110, Cys-99-Cys-133, and Cys-103-Cys-127. Asn-42 carries an N-linked (GlcNAc...) asparagine glycan. The helical transmembrane segment at 206–226 threads the bilayer; sequence IGLISIICLSATLFTFLTFLI. Residues 227–237 are Cytoplasmic-facing; sequence DVTRFRYPERP. Residues 238–258 form a helical membrane-spanning segment; that stretch reads IIFYAVCYMMVSLIFFIGFLL. Residues 259–288 are Extracellular-facing; it reads EDRVACNASIPAQYKASTVTQGSHNKACTM. A glycan (N-linked (GlcNAc...) asparagine) is linked at Asn-265. A helical transmembrane segment spans residues 289 to 309; sequence LFMILYFFTMAGSVWWVILTI. At 310–328 the chain is on the cytoplasmic side; that stretch reads TWFLAAVPKWGSEAIEKKA. The helical transmembrane segment at 329–349 threads the bilayer; it reads LLFHASAWGIPGTLTIILLAM. Topologically, residues 350–374 are extracellular; the sequence is NKIEGDNISGVCFVGLYDVDALRYF. The N-linked (GlcNAc...) asparagine glycan is linked to Asn-356. A helical membrane pass occupies residues 375 to 395; sequence VLAPLCLYVVVGVSLLLAGII. The Cytoplasmic segment spans residues 396 to 420; that stretch reads SLNRVRIEIPLEKENQDKLVKFMIR. The chain crosses the membrane as a helical span at residues 421-441; it reads IGVFSILYLVPLLVVIGCYFY. The Extracellular portion of the chain corresponds to 442–477; the sequence is EQAYRGIWETTWIQERCREYHIPCPYQVTQMSRPDL. The helical transmembrane segment at 478 to 498 threads the bilayer; the sequence is ILFLMKYLMALIVGIPSVFWV. The Cytoplasmic portion of the chain corresponds to 499–666; that stretch reads GSKKTCFEWA…RVIEEDGTSA (168 aa). The Lys-Thr-X-X-X-Trp motif, mediates interaction with the PDZ domain of Dvl family members motif lies at 502-507; that stretch reads KTCFEW. Positions 538–666 are disordered; the sequence is RDPNTPIIRK…RVIEEDGTSA (129 aa). Over residues 550–565 the composition is skewed to polar residues; that stretch reads GTSTQGTSTHASSTQL. Over residues 617 to 638 the composition is skewed to basic and acidic residues; that stretch reads LTDHSRHSSSHRLNEQSRHSSI. Over residues 639-656 the composition is skewed to polar residues; the sequence is RDLSNNPMTHITHGTSMN.

It belongs to the G-protein coupled receptor Fz/Smo family. Interacts with VANGL2. Ubiquitinated by ZNRF3, leading to its degradation by the proteasome. Widely expressed. Relatively high expression in the CNS, including regions of the limbic system, in kidney, pancreas, skeletal muscle, uterus and testis.

The protein resides in the membrane. It is found in the cell membrane. It localises to the cell surface. Its subcellular location is the apical cell membrane. Functionally, receptor for Wnt proteins. Most of frizzled receptors are coupled to the beta-catenin canonical signaling pathway, which leads to the activation of disheveled proteins, inhibition of GSK-3 kinase, nuclear accumulation of beta-catenin and activation of Wnt target genes. A second signaling pathway involving PKC and calcium fluxes has been seen for some family members, but it is not yet clear if it represents a distinct pathway or if it can be integrated in the canonical pathway, as PKC seems to be required for Wnt-mediated inactivation of GSK-3 kinase. Both pathways seem to involve interactions with G-proteins. Activation by Wnt5A stimulates PKC activity via a G-protein-dependent mechanism. Involved in transduction and intercellular transmission of polarity information during tissue morphogenesis and/or in differentiated tissues. Plays a role in controlling early axon growth and guidance processes necessary for the formation of a subset of central and peripheral major fiber tracts. Required for the development of major fiber tracts in the central nervous system, including: the anterior commissure, the corpus callosum, the thalamocortical, corticothalamic and nigrostriatal tracts, the corticospinal tract, the fasciculus retroflexus, the mammillothalamic tract, the medial lemniscus, and ascending fiber tracts from the spinal cord to the brain. In the peripheral nervous system, controls axon growth in distinct populations of cranial and spinal motor neurons, including the facial branchimotor nerve, the hypoglossal nerve, the phrenic nerve, and motor nerves innervating dorsal limbs. Involved in the migration of cranial neural crest cells. May also be implicated in the transmission of sensory information from the trunk and limbs to the brain. Controls commissural sensory axons guidance after midline crossing along the anterior-posterior axis in the developing spinal cord in a Wnt-dependent signaling pathway. Together with FZD6, is involved in the neural tube closure and plays a role in the regulation of the establishment of planar cell polarity (PCP), particularly in the orientation of asymmetric bundles of stereocilia on the apical faces of a subset of auditory and vestibular sensory cells located in the inner ear. Promotes neurogenesis by maintaining sympathetic neuroblasts within the cell cycle in a beta-catenin-dependent manner. This chain is Frizzled-3 (FZD3), found in Homo sapiens (Human).